We begin with the raw amino-acid sequence, 454 residues long: Glutamate--tRNA ligase (454 aa).

Positions 7-17 (PSPTGCLHIGG) match the 'HIGH' region motif. Cysteine 96, cysteine 98, cysteine 123, and aspartate 125 together coordinate Zn(2+). A 'KMSKS' region motif is present at residues 230-234 (RLSKR). Position 233 (lysine 233) interacts with ATP.

Belongs to the class-I aminoacyl-tRNA synthetase family. Glutamate--tRNA ligase type 1 subfamily. Monomer. Zn(2+) is required as a cofactor.

The protein resides in the cytoplasm. The enzyme catalyses tRNA(Glu) + L-glutamate + ATP = L-glutamyl-tRNA(Glu) + AMP + diphosphate. Its function is as follows. Catalyzes the attachment of glutamate to tRNA(Glu) in a two-step reaction: glutamate is first activated by ATP to form Glu-AMP and then transferred to the acceptor end of tRNA(Glu). This is Glutamate--tRNA ligase from Ruthia magnifica subsp. Calyptogena magnifica.